Consider the following 617-residue polypeptide: Formin-binding protein 1 (617 aa).

Residues 1–79 are required for self-association and induction of membrane tubulation; sequence MSWGTELWDQ…CKAFISNLNE (79 aa). An F-BAR domain is found at 1–264; the sequence is MSWGTELWDQ…AAESIDQKND (264 aa). The tract at residues 1–335 is interaction with microtubules; sequence MSWGTELWDQ…KKNKLMSLLT (335 aa). N6-acetyllysine is present on residues lysine 66 and lysine 110. The stretch at 67-259 forms a coiled coil; the sequence is YTSCKAFISN…DGIVKAAESI (193 aa). The segment at 251–617 is required for self-association and induction of membrane tubulation; it reads GIVKAAESID…VCLDKNAKDS (367 aa). Disordered regions lie at residues 280–315 and 333–366; these read GDIEFEDYTQPMKRTVSDNSLSNSRGEGKPDLKFGG and LLTSPHQPPPPPPASASPSAVPNGPQSPKQQKEP. Phosphoserine is present on residues serine 296 and serine 299. Residues 338 to 347 show a composition bias toward pro residues; sequence HQPPPPPPAS. Phosphoserine is present on residues serine 349 and serine 359. Residues 398-490 are a coiled coil; the sequence is TPEDFSNLPP…EVEGRLPARS (93 aa). The interaction with RND2 stretch occupies residues 400 to 552; it reads EDFSNLPPEQ…FDDEEPLPAI (153 aa). The 78-residue stretch at 404-481 folds into the REM-1 domain; sequence NLPPEQRRKK…TQKFEAWLAE (78 aa). The interval 486-531 is disordered; that stretch reads LPARSEQARRQSGLYDSQNPPTVNNCAQDRESPDGSYTEEQSQESE. Positions 495–617 are interaction with PDE6G; that stretch reads RQSGLYDSQN…VCLDKNAKDS (123 aa). At serine 497 the chain carries Phosphoserine. Positions 499 to 512 are enriched in polar residues; the sequence is LYDSQNPPTVNNCA. Tyrosine 500 is subject to Phosphotyrosine. The interval 514-617 is required for interaction with TNKS; it reads DRESPDGSYT…VCLDKNAKDS (104 aa). Serine 521 is modified (phosphoserine). Residues 535-617 are interaction with DNM1 and DNM3; it reads LATDFDDEFD…VCLDKNAKDS (83 aa). In terms of domain architecture, SH3 spans 550-611; that stretch reads PAIGTCKALY…PTSYVEVCLD (62 aa). Residues 550-617 form an interaction with ARHGAP17, DAAM1, DIAPH1 and DIAPH2 region; that stretch reads PAIGTCKALY…VCLDKNAKDS (68 aa). The interval 553–609 is interaction with DNM2 and WASL; it reads GTCKALYTFEGQNEGTISVVEGETLYVIEEDKGDGWTRIRRNEDEEGYVPTSYVEVC. The interaction with FASLG stretch occupies residues 553-610; sequence GTCKALYTFEGQNEGTISVVEGETLYVIEEDKGDGWTRIRRNEDEEGYVPTSYVEVCL.

It belongs to the FNBP1 family. In terms of assembly, interacts specifically with GTP-bound RND2 and CDC42. Interacts with PDE6G and microtubules. Homodimerizes, the dimers can polymerize end-to-end to form filamentous structures. Interacts with AKAP9, ARHGAP17, DAAM1, DIAPH1, DIAPH2, DNM1, DNM2, DNM3, FASLG/FASL, SNX2 and WASL/N-WASP. May interact with TNKS. Very highly expressed in the epithelial cells of the gastrointestinal tract, respiratory, reproductive and urinary systems. Also highly expressed in brown adipose tissue, cardiomyocytes, enteric ganglia and glucagon producing cells of the pancreas. Expressed in germ cells of the testis and all regions of the brain.

The protein resides in the cytoplasm. It localises to the cytoskeleton. The protein localises to the cell cortex. Its subcellular location is the lysosome. It is found in the cytoplasmic vesicle. The protein resides in the cell membrane. It localises to the membrane. The protein localises to the clathrin-coated pit. In terms of biological role, may act as a link between RND2 signaling and regulation of the actin cytoskeleton. Required to coordinate membrane tubulation with reorganization of the actin cytoskeleton during the late stage of clathrin-mediated endocytosis. Binds to lipids such as phosphatidylinositol 4,5-bisphosphate and phosphatidylserine and promotes membrane invagination and the formation of tubules. Also enhances actin polymerization via the recruitment of WASL/N-WASP, which in turn activates the Arp2/3 complex. Actin polymerization may promote the fission of membrane tubules to form endocytic vesicles. May be required for the lysosomal retention of FASLG/FASL. The sequence is that of Formin-binding protein 1 (FNBP1) from Homo sapiens (Human).